A 520-amino-acid polypeptide reads, in one-letter code: ATP synthase subunit alpha 2 (520 aa).

Residue 176 to 183 (GDRQTGKT) coordinates ATP.

The protein belongs to the ATPase alpha/beta chains family. F-type ATPases have 2 components, CF(1) - the catalytic core - and CF(0) - the membrane proton channel. CF(1) has five subunits: alpha(3), beta(3), gamma(1), delta(1), epsilon(1). CF(0) has three main subunits: a(1), b(2) and c(9-12). The alpha and beta chains form an alternating ring which encloses part of the gamma chain. CF(1) is attached to CF(0) by a central stalk formed by the gamma and epsilon chains, while a peripheral stalk is formed by the delta and b chains.

The protein resides in the cell inner membrane. The enzyme catalyses ATP + H2O + 4 H(+)(in) = ADP + phosphate + 5 H(+)(out). In terms of biological role, produces ATP from ADP in the presence of a proton gradient across the membrane. The alpha chain is a regulatory subunit. In Polaromonas naphthalenivorans (strain CJ2), this protein is ATP synthase subunit alpha 2.